Reading from the N-terminus, the 154-residue chain is Mating pheromone 2 (154 aa).

The signal sequence occupies residues 1 to 16 (MKAIFIILAILMVTQA). Residues 17-52 (FKMTSKVNTKLQSQIQSKFQSKNKLASTFQTSSQLK) constitute a propeptide that is removed on maturation.

Its subcellular location is the secreted. Functionally, mating ciliate pheromones (or gamones) are diffusible extracellular communication signals that distinguish different intraspecific classes of cells commonly referred to as 'mating types'. They prepare the latter for conjugation by changing their cell surface properties. The sequence is that of Mating pheromone 2 from Euplotoides octocarinatus (Freshwater ciliate).